A 168-amino-acid polypeptide reads, in one-letter code: ATP synthase subunit b (168 aa).

Residues alanine 9–leucine 29 form a helical membrane-spanning segment.

This sequence belongs to the ATPase B chain family. F-type ATPases have 2 components, F(1) - the catalytic core - and F(0) - the membrane proton channel. F(1) has five subunits: alpha(3), beta(3), gamma(1), delta(1), epsilon(1). F(0) has three main subunits: a(1), b(2) and c(10-14). The alpha and beta chains form an alternating ring which encloses part of the gamma chain. F(1) is attached to F(0) by a central stalk formed by the gamma and epsilon chains, while a peripheral stalk is formed by the delta and b chains.

It localises to the cell membrane. F(1)F(0) ATP synthase produces ATP from ADP in the presence of a proton or sodium gradient. F-type ATPases consist of two structural domains, F(1) containing the extramembraneous catalytic core and F(0) containing the membrane proton channel, linked together by a central stalk and a peripheral stalk. During catalysis, ATP synthesis in the catalytic domain of F(1) is coupled via a rotary mechanism of the central stalk subunits to proton translocation. Functionally, component of the F(0) channel, it forms part of the peripheral stalk, linking F(1) to F(0). In Bacillus cereus (strain ATCC 10987 / NRS 248), this protein is ATP synthase subunit b.